The chain runs to 152 residues: UPF0178 protein YaiI (152 aa).

It belongs to the UPF0178 family.

This chain is UPF0178 protein YaiI, found in Escherichia coli O81 (strain ED1a).